A 227-amino-acid polypeptide reads, in one-letter code: NAD(P)H-quinone oxidoreductase subunit K, chloroplastic (227 aa).

[4Fe-4S] cluster-binding residues include C43, C44, C108, and C139.

The protein belongs to the complex I 20 kDa subunit family. NDH is composed of at least 16 different subunits, 5 of which are encoded in the nucleus. [4Fe-4S] cluster serves as cofactor.

It localises to the plastid. The protein localises to the chloroplast thylakoid membrane. The catalysed reaction is a plastoquinone + NADH + (n+1) H(+)(in) = a plastoquinol + NAD(+) + n H(+)(out). The enzyme catalyses a plastoquinone + NADPH + (n+1) H(+)(in) = a plastoquinol + NADP(+) + n H(+)(out). Its function is as follows. NDH shuttles electrons from NAD(P)H:plastoquinone, via FMN and iron-sulfur (Fe-S) centers, to quinones in the photosynthetic chain and possibly in a chloroplast respiratory chain. The immediate electron acceptor for the enzyme in this species is believed to be plastoquinone. Couples the redox reaction to proton translocation, and thus conserves the redox energy in a proton gradient. The sequence is that of NAD(P)H-quinone oxidoreductase subunit K, chloroplastic from Pelargonium hortorum (Common geranium).